We begin with the raw amino-acid sequence, 564 residues long: Rho guanine nucleotide exchange factor 9 (564 aa).

One can recognise an SH3 domain in the interval 8-67; sequence DSIVSAEAVWDHATMANRELAFKAGDVIKVLDASNKDWWWGQIDDEEGWFPASFVRLWVN. An interaction with GPHN region spans residues 100 to 110; the sequence is RDQMRANVINE. In terms of domain architecture, DH spans 103–287; the sequence is MRANVINEIM…RNVTQQINER (185 aa). The region spanning 318-425 is the PH domain; it reads ELIYTGEMAW…WLRAFREERK (108 aa). The tract at residues 451–470 is disordered; it reads KVPKQKGVNSARSVPPSYPP. At Ser502 the chain carries Phosphoserine.

As to quaternary structure, interacts with GPHN.

Its subcellular location is the cytoplasm. It localises to the postsynaptic density. In terms of biological role, acts as a guanine nucleotide exchange factor (GEF) for CDC42. Promotes formation of GPHN clusters. The chain is Rho guanine nucleotide exchange factor 9 (ARHGEF9) from Pongo abelii (Sumatran orangutan).